The chain runs to 1264 residues: BRCA2-interacting transcriptional repressor EMSY (1264 aa).

The interaction with BRCA2 stretch occupies residues 1-442; it reads MPVVWPTLLD…LPKPVTATLP (442 aa). Positions 16–114 constitute an ENT domain; that stretch reads CKRILRKLEL…EWSIEGRRLV (99 aa). Residues 118–122 are interaction with ZMYND11; that stretch reads PRLVP. Positions 145–179 are disordered; the sequence is PVPAETASKDGVSCSDEDEKPRKRRRTNSSSSSPV. A Phosphothreonine modification is found at Thr171. 2 positions are modified to phosphoserine: Ser173 and Ser177. O-linked (GlcNAc) serine glycosylation is found at Ser192 and Ser200. At Ser202 the chain carries Phosphoserine. O-linked (GlcNAc) threonine glycosylation occurs at Thr235. The segment covering 364-406 has biased composition (low complexity); that stretch reads FPKQHQQSPKQQLQQVQQQTQQPVAQPSSVSQQQQPQQSALPP. Residues 364 to 407 are disordered; it reads FPKQHQQSPKQQLQQVQQQTQQPVAQPSSVSQQQQPQQSALPPG. 2 O-linked (GlcNAc) threonine glycosylation sites follow: Thr465 and Thr470. An O-linked (GlcNAc) serine glycan is attached at Ser521. A compositionally biased stretch (polar residues) spans 660–671; the sequence is SRVADASNSSAQ. The tract at residues 660–700 is disordered; sequence SRVADASNSSAQEGKEEPQGYTDSSSSSTESSQSSQDSQPV. Residues 681-698 show a composition bias toward low complexity; it reads TDSSSSSTESSQSSQDSQ. Ser782 and Ser785 each carry phosphoserine. The O-linked (GlcNAc) threonine glycan is linked to Thr1069. Ser1085 carries the post-translational modification Phosphoserine. The disordered stretch occupies residues 1232 to 1264; sequence QLDDDETAMEQDIDSSTEDGTEPSPSQSAVERS. The span at 1233–1252 shows a compositional bias: acidic residues; it reads LDDDETAMEQDIDSSTEDGT. Polar residues predominate over residues 1254–1264; sequence PSPSQSAVERS.

Homodimer. Interacts with the transactivation domain of BRCA2. Interacts with CBX1 (via chromoshadow domain). Interacts with ZMYND11. Does not interact with CBX3 or CBX5. Component of a nuclear receptor-mediated transcription complex composed of at least ZNF335, CCAR2 and EMSY; the complex stimulates the transcription of nuclear receptor target genes such as SOX9 and HOXA1. Within the complex interacts with CCAR2 and ZNF335. Components of this complex may associate with components of a histone methylation complex to form a complex at least composed of ZNF335, HCFC1, CCAR2, EMSY, MKI67, RBBP5, ASH2L and WDR5. Within this complex, interacts with ASH2L and RBBP5.

It is found in the nucleus. Its function is as follows. Regulator which is able to repress transcription, possibly via its interaction with a multiprotein chromatin remodeling complex that modifies the chromatin. Its interaction with BRCA2 suggests that it may play a central role in the DNA repair function of BRCA2. Mediates ligand-dependent transcriptional activation by nuclear hormone receptors. The polypeptide is BRCA2-interacting transcriptional repressor EMSY (Mus musculus (Mouse)).